The chain runs to 160 residues: Protein cornichon homolog 2 (160 aa).

Topologically, residues 1–10 (MAFTFAAFCY) are cytoplasmic. A helical membrane pass occupies residues 11-31 (MLTLVLCASLIFFVIWHIIAF). Residues 32–72 (DELRTDFKNPIDQGNPARARERLKNIERICCLLRKLVVPEY) lie on the Lumenal side of the membrane. Residues 73–93 (SIHGLFCLMFLCAAEWVTLGL) form a helical membrane-spanning segment. Residues 94 to 138 (NIPLLFYHLWRYFHRPADGSEVMYDAVSIMNADILNYCQKESWCK) lie on the Cytoplasmic side of the membrane. Residues 139–159 (LAFYLLSFFYYLYSMVYTLVS) form a helical membrane-spanning segment. Residue phenylalanine 160 is a topological domain, lumenal.

Belongs to the cornichon family. As to quaternary structure, acts as an auxiliary subunit for AMPA-selective glutamate receptors (AMPARs). Found in a complex with GRIA1, GRIA2, GRIA3, GRIA4, CNIH3, CACNG2, CACNG3, CACNG4, CACNG5, CACNG7 and CACNG8. Interacts with CACGN8. Interacts with GRIA1. Found in a complex with GRIA1, GRIA2, GRIA3, GRIA4, DLG4 and CACNG8. In terms of tissue distribution, expression is up-regulated in dorsolateral prefrontal cortex of patients with schizophrenia (postmortem brain study).

Its subcellular location is the endoplasmic reticulum membrane. The protein localises to the postsynaptic cell membrane. The protein resides in the cell projection. It localises to the dendrite. It is found in the dendritic spine. Its subcellular location is the postsynaptic density. In terms of biological role, regulates the trafficking and gating properties of AMPA-selective glutamate receptors (AMPARs). Promotes their targeting to the cell membrane and synapses and modulates their gating properties by regulating their rates of activation, deactivation and desensitization. Blocks CACNG8-mediated resensitization of AMPA receptors. This chain is Protein cornichon homolog 2, found in Homo sapiens (Human).